Consider the following 383-residue polypeptide: Dihydroorotase (383 aa).

Residues H47 and H49 each coordinate Zn(2+). Substrate contacts are provided by residues 49-51 (HFR) and N81. Positions 128, 159, 198, and 264 each coordinate Zn(2+). N6-carboxylysine is present on K128. D264 is an active-site residue. Substrate contacts are provided by residues H268 and 280–281 (PG).

This sequence belongs to the metallo-dependent hydrolases superfamily. DHOase family. Class I DHOase subfamily. Zn(2+) is required as a cofactor.

It carries out the reaction (S)-dihydroorotate + H2O = N-carbamoyl-L-aspartate + H(+). The protein operates within pyrimidine metabolism; UMP biosynthesis via de novo pathway; (S)-dihydroorotate from bicarbonate: step 3/3. Catalyzes the reversible cyclization of carbamoyl aspartate to dihydroorotate. This chain is Dihydroorotase, found in Pyrobaculum aerophilum (strain ATCC 51768 / DSM 7523 / JCM 9630 / CIP 104966 / NBRC 100827 / IM2).